Here is a 469-residue protein sequence, read N- to C-terminus: Ubiquitin carboxyl-terminal hydrolase MINDY-1 (469 aa).

A disordered region spans residues Met1–Arg105. Basic and acidic residues predominate over residues Glu23–Asp44. Residue Ser103 is modified to Phosphoserine. Cys137 acts as the Nucleophile in catalysis. The active-site Proton acceptor is the His319. Positions Gln388–Gln428 are ubiquitin-binding domain (UBD). Residues Gln401–Leu469 are disordered. Positions Leu415–Ala448 are enriched in low complexity. Residue Ser441 is modified to Phosphoserine. Basic and acidic residues predominate over residues Ala453–Leu469.

Belongs to the MINDY deubiquitinase family. FAM63 subfamily.

The catalysed reaction is Thiol-dependent hydrolysis of ester, thioester, amide, peptide and isopeptide bonds formed by the C-terminal Gly of ubiquitin (a 76-residue protein attached to proteins as an intracellular targeting signal).. Hydrolase that can specifically remove 'Lys-48'-linked conjugated ubiquitin from proteins. Has exodeubiquitinase activity and has a preference for long polyubiquitin chains. May play a regulatory role at the level of protein turnover. This is Ubiquitin carboxyl-terminal hydrolase MINDY-1 (MINDY1) from Bos taurus (Bovine).